Here is a 521-residue protein sequence, read N- to C-terminus: Glucose-6-phosphate isomerase (521 aa).

Glu327 acts as the Proton donor in catalysis. Active-site residues include His358 and Lys486.

The protein belongs to the GPI family.

It localises to the cytoplasm. The enzyme catalyses alpha-D-glucose 6-phosphate = beta-D-fructose 6-phosphate. It participates in carbohydrate biosynthesis; gluconeogenesis. The protein operates within carbohydrate degradation; glycolysis; D-glyceraldehyde 3-phosphate and glycerone phosphate from D-glucose: step 2/4. In terms of biological role, catalyzes the reversible isomerization of glucose-6-phosphate to fructose-6-phosphate. This chain is Glucose-6-phosphate isomerase, found in Bordetella petrii (strain ATCC BAA-461 / DSM 12804 / CCUG 43448).